The chain runs to 279 residues: Mirror-image polydactyly gene 1 protein homolog (279 aa).

Residues 1–11 show a composition bias toward basic and acidic residues; that stretch reads MNSEQSIRELG. The tract at residues 1–21 is disordered; that stretch reads MNSEQSIRELGNEVPSEDLEL. Coiled-coil stretches lie at residues 65 to 169 and 218 to 255; these read LNKE…MLEN and AEEM…STNN. The disordered stretch occupies residues 247 to 268; it reads KQNQTSTNNTKHPTAKNNQEHT. Polar residues predominate over residues 248–263; the sequence is QNQTSTNNTKHPTAKN.

The sequence is that of Mirror-image polydactyly gene 1 protein homolog (Mipol1) from Mus musculus (Mouse).